The sequence spans 205 residues: Ribonuclease HII (205 aa).

The RNase H type-2 domain maps to 1–203; it reads MKAGIDEAGK…VSNLRQKTLD (203 aa). A divalent metal cation contacts are provided by Asp-6 and Glu-7. Arg-46 contributes to the substrate binding site. Residue Asp-101 coordinates a divalent metal cation. Residues Lys-143, Arg-146, and Tyr-164 each contribute to the substrate site.

Belongs to the RNase HII family. The cofactor is Mn(2+). Mg(2+) serves as cofactor.

It localises to the cytoplasm. The catalysed reaction is Endonucleolytic cleavage to 5'-phosphomonoester.. In terms of biological role, endonuclease that specifically degrades the RNA of RNA-DNA hybrids. The sequence is that of Ribonuclease HII (rnhB) from Archaeoglobus fulgidus (strain ATCC 49558 / DSM 4304 / JCM 9628 / NBRC 100126 / VC-16).